Reading from the N-terminus, the 335-residue chain is DNA polymerase beta (335 aa).

K41 is covalently cross-linked (Glycyl lysine isopeptide (Lys-Gly) (interchain with G-Cter in ubiquitin)). A K(+)-binding site is contributed by K60. K60 serves as a coordination point for Na(+). A Glycyl lysine isopeptide (Lys-Gly) (interchain with G-Cter in ubiquitin) cross-link involves residue K61. The K(+) site is built by L62 and V65. Na(+) contacts are provided by L62 and V65. The Nucleophile; Schiff-base intermediate with DNA; for 5'-dRP lyase activity role is filled by K72. K72 is subject to N6-acetyllysine. A Glycyl lysine isopeptide (Lys-Gly) (interchain with G-Cter in ubiquitin) cross-link involves residue K81. R83 is modified (omega-N-methylarginine; by PRMT6). The K(+) site is built by T101, V103, and I106. 3 residues coordinate Na(+): T101, V103, and I106. R149 serves as a coordination point for a 2'-deoxyribonucleoside 5'-triphosphate. The residue at position 152 (R152) is an Omega-N-methylarginine; by PRMT6. Residues S180, R183, G189, and D190 each coordinate a 2'-deoxyribonucleoside 5'-triphosphate. A DNA-binding region spans residues 183 to 192; sequence RGAESSGDMD. D190, D192, and D256 together coordinate Mg(2+).

Belongs to the DNA polymerase type-X family. As to quaternary structure, monomer. Binds single-stranded DNA (ssDNA). Interacts with APEX1, LIG1, LIG3, FEN1, PCNA and XRCC1. Interacts with HUWE1/ARF-BP1, STUB1/CHIP and USP47. Interacts with FAM168A. The cofactor is Mg(2+). Methylation by PRMT6 stimulates the polymerase activity by enhancing DNA binding and processivity. In terms of processing, ubiquitinated at Lys-41, Lys-61 and Lys-81: monoubiquitinated by HUWE1/ARF-BP1. Monoubiquitinated protein is then the target of STUB1/CHIP, which catalyzes polyubiquitination from monoubiquitin, leading to degradation by the proteasome. USP47 mediates the deubiquitination of monoubiquitinated protein, preventing polyubiquitination by STUB1/CHIP and its subsequent degradation.

It localises to the nucleus. It is found in the cytoplasm. The enzyme catalyses DNA(n) + a 2'-deoxyribonucleoside 5'-triphosphate = DNA(n+1) + diphosphate. The catalysed reaction is a 5'-end 2'-deoxyribose-2'-deoxyribonucleotide-DNA = (2E,4S)-4-hydroxypenten-2-al-5-phosphate + a 5'-end 5'-phospho-2'-deoxyribonucleoside-DNA + H(+). It carries out the reaction 2'-deoxyribonucleotide-(2'-deoxyribose 5'-phosphate)-2'-deoxyribonucleotide-DNA = a 3'-end 2'-deoxyribonucleotide-(2,3-dehydro-2,3-deoxyribose 5'-phosphate)-DNA + a 5'-end 5'-phospho-2'-deoxyribonucleoside-DNA + H(+). Its function is as follows. Repair polymerase that plays a key role in base-excision repair. During this process, the damaged base is excised by specific DNA glycosylases, the DNA backbone is nicked at the abasic site by an apurinic/apyrimidic (AP) endonuclease, and POLB removes 5'-deoxyribose-phosphate from the preincised AP site acting as a 5'-deoxyribose-phosphate lyase (5'-dRP lyase); through its DNA polymerase activity, it adds one nucleotide to the 3' end of the arising single-nucleotide gap. Conducts 'gap-filling' DNA synthesis in a stepwise distributive fashion rather than in a processive fashion as for other DNA polymerases. It is also able to cleave sugar-phosphate bonds 3' to an intact AP site, acting as an AP lyase. This chain is DNA polymerase beta (Polb), found in Rattus norvegicus (Rat).